Here is a 460-residue protein sequence, read N- to C-terminus: tRNA modification GTPase MnmE (460 aa).

(6S)-5-formyl-5,6,7,8-tetrahydrofolate contacts are provided by Arg-26, Glu-88, and Arg-127. The 160-residue stretch at 222 to 381 (GLKVAIVGRP…LESAILSKVQ (160 aa)) folds into the TrmE-type G domain. Position 232 (Asn-232) interacts with K(+). GTP contacts are provided by residues 232–237 (NVGKSS), 251–257 (TELPGTT), and 276–279 (DTAG). Ser-236 contacts Mg(2+). K(+) contacts are provided by Thr-251, Leu-253, and Thr-256. Residue Thr-257 coordinates Mg(2+). Lys-460 serves as a coordination point for (6S)-5-formyl-5,6,7,8-tetrahydrofolate.

Belongs to the TRAFAC class TrmE-Era-EngA-EngB-Septin-like GTPase superfamily. TrmE GTPase family. Homodimer. Heterotetramer of two MnmE and two MnmG subunits. It depends on K(+) as a cofactor.

It is found in the cytoplasm. Exhibits a very high intrinsic GTPase hydrolysis rate. Involved in the addition of a carboxymethylaminomethyl (cmnm) group at the wobble position (U34) of certain tRNAs, forming tRNA-cmnm(5)s(2)U34. This chain is tRNA modification GTPase MnmE, found in Cyanothece sp. (strain PCC 7425 / ATCC 29141).